Reading from the N-terminus, the 199-residue chain is 7-methyl-GTP pyrophosphatase (199 aa).

Asp76 functions as the Proton acceptor in the catalytic mechanism.

Belongs to the Maf family. YceF subfamily. A divalent metal cation is required as a cofactor.

It is found in the cytoplasm. It carries out the reaction N(7)-methyl-GTP + H2O = N(7)-methyl-GMP + diphosphate + H(+). Nucleoside triphosphate pyrophosphatase that hydrolyzes 7-methyl-GTP (m(7)GTP). May have a dual role in cell division arrest and in preventing the incorporation of modified nucleotides into cellular nucleic acids. In Mesorhizobium japonicum (strain LMG 29417 / CECT 9101 / MAFF 303099) (Mesorhizobium loti (strain MAFF 303099)), this protein is 7-methyl-GTP pyrophosphatase.